The chain runs to 901 residues: HTH-type transcriptional regulator MalT (901 aa).

Residue 39 to 46 (SPAGYGKT) coordinates ATP. Positions 829–894 (ELIRTSPLTQ…DAVQHAQQLL (66 aa)) constitute an HTH luxR-type domain. The segment at residues 853–872 (NDQIAGELDVAATTIKTHIR) is a DNA-binding region (H-T-H motif).

It belongs to the MalT family. Monomer in solution. Oligomerizes to an active state in the presence of the positive effectors ATP and maltotriose.

With respect to regulation, activated by ATP and maltotriose, which are both required for DNA binding. Its function is as follows. Positively regulates the transcription of the maltose regulon whose gene products are responsible for uptake and catabolism of malto-oligosaccharides. Specifically binds to the promoter region of its target genes, recognizing a short DNA motif called the MalT box. The polypeptide is HTH-type transcriptional regulator MalT (Cronobacter sakazakii (strain ATCC BAA-894) (Enterobacter sakazakii)).